Reading from the N-terminus, the 30-residue chain is Rothein 3.4 (30 aa).

The residue at position 30 (Leu-30) is a Leucine amide.

This sequence belongs to the frog skin active peptide (FSAP) family. Rothein subfamily. As to expression, expressed by the skin dorsal glands.

It is found in the secreted. Lacks antimicrobial activity. Does not inhibit the formation of NO by neuronal nitric oxide. This chain is Rothein 3.4, found in Litoria rothii (Roth's tree frog).